The following is a 139-amino-acid chain: Large-conductance mechanosensitive channel (139 aa).

The next 2 helical transmembrane spans lie at 9-29 (AFAV…GAAF) and 79-99 (IQTV…VKAI).

The protein belongs to the MscL family. As to quaternary structure, homopentamer.

It localises to the cell inner membrane. Its function is as follows. Channel that opens in response to stretch forces in the membrane lipid bilayer. May participate in the regulation of osmotic pressure changes within the cell. The sequence is that of Large-conductance mechanosensitive channel from Pseudomonas putida (strain GB-1).